Reading from the N-terminus, the 412-residue chain is NADH-ubiquinone oxidoreductase 49 kDa subunit (412 aa).

This sequence belongs to the complex I 49 kDa subunit family.

The protein localises to the hydrogenosome. The catalysed reaction is a ubiquinone + NADH + 5 H(+)(in) = a ubiquinol + NAD(+) + 4 H(+)(out). Functionally, transfer of electrons from NADH to the respiratory chain. The immediate electron acceptor for the enzyme is believed to be ubiquinone. Component of the iron-sulfur (IP) fragment of the enzyme. The protein is NADH-ubiquinone oxidoreductase 49 kDa subunit (nad7) of Nyctotherus ovalis.